Reading from the N-terminus, the 793-residue chain is Protein PAT1 homolog (793 aa).

Residues serine 200 and serine 208 each carry the phosphoserine modification. Disordered regions lie at residues 203-256 and 292-312; these read PPGS…TGNR and MLQQPPHQNGLMPPQMQGSQN. Residues 219-242 are compositionally biased toward polar residues; it reads PYQSGGPQMGSPNFSPFPNLQPQL. Residues serine 342 and serine 343 each carry the phosphoserine modification. Residues 476–501 form a disordered region; the sequence is RPLLEVDPPNSAKFGNAEHKPTDKPL. Basic and acidic residues predominate over residues 491 to 501; the sequence is NAEHKPTDKPL.

As to quaternary structure, interacts with MPK4 and SUMM2. In terms of processing, phosphorylated at Ser-208 by MPK4 upon flg22 elicitation. Phosphorylated at Ser-200, Ser-342 and Ser-343 upon flg22 elicitation.

It localises to the cytoplasm. The protein localises to the P-body. Its function is as follows. Activator of mRNA decapping. Involved in mRNA decay via decapping. Involved in disease resistance in response to biotrophic and necrotrophic pathogens. Is part of a signaling pathway including MPK4 and the disease resistance protein SUMM2. The chain is Protein PAT1 homolog from Arabidopsis thaliana (Mouse-ear cress).